Consider the following 549-residue polypeptide: S-methyl thiourocanate hydratase (549 aa).

11 residues coordinate NAD(+): Met49, Gly173, Met174, Gly175, Asp193, Ser198, Asn239, Ala240, Gln260, Val270, and Tyr318.

Belongs to the urocanase family. S-methyl thiourocanate hydratase subfamily. NAD(+) is required as a cofactor.

It catalyses the reaction S-methyl-(E)-thiourocanate + H2O = S-methyl-thiohydantoin-5-propanoate. In terms of biological role, hydratase involved in the catabolism of S-methyl ergothioneine. Catalyzes the 1,4-addition of H(2)O to S-methyl thiourocanate, leading to the formation of S-methyl-thiohydantoin-5-propanoate, the second step in S-methyl ergothioneine degradation. Cannot use urocanate or thiourocanate as substrate. The polypeptide is S-methyl thiourocanate hydratase (Variovorax sp. (strain JCM 16519 / RA8)).